Reading from the N-terminus, the 452-residue chain is Pentatricopeptide repeat-containing protein At2g30780 (452 aa).

PPR repeat units lie at residues 137–171 (TASVYNSLMSVYMWNGLAEECQSLFKDFRRQTHCA), 173–207 (TVVTYNILVSVYGRLLMVKNMEAAFEELQKVKLPP), 208–242 (NSVTYNFLIAGYMTAWNWDKMEATFQEMKRGPVEP), 243–273 (DTDTYQLMLRGYANSGNLNRMEEMYEVIKDQ), 350–384 (KSSIMRAIIAAYFRCNEVDNLANFVKRAESAGWKL), 385–419 (CRSLYHCKIMMYGSQKRFEEMEGVVNEMAETNYGL), and 420–452 (VTKTFAIMIKAYKNHGMESDAEKVKGKMLKRGL).

It belongs to the PPR family. P subfamily.

This chain is Pentatricopeptide repeat-containing protein At2g30780, found in Arabidopsis thaliana (Mouse-ear cress).